The primary structure comprises 317 residues: Curved DNA-binding protein (317 aa).

Residues 5–69 (DYYKILGVEP…QKRAEFDEIR (65 aa)) form the J domain.

It localises to the cytoplasm. The protein localises to the nucleoid. In terms of biological role, DNA-binding protein that preferentially recognizes a curved DNA sequence. It is probably a functional analog of DnaJ; displays overlapping activities with DnaJ, but functions under different conditions, probably acting as a molecular chaperone in an adaptive response to environmental stresses other than heat shock. Lacks autonomous chaperone activity; binds native substrates and targets them for recognition by DnaK. Its activity is inhibited by the binding of CbpM. This is Curved DNA-binding protein from Pseudomonas putida (strain W619).